The sequence spans 786 residues: Neprilysin-3 (786 aa).

Over 1 to 52 (MTRYKQTEFTEDDSSSIGGIQLNEATGHTGMQIRYHTARATWNWRSRNKTEK) the chain is Cytoplasmic. The chain crosses the membrane as a helical; Signal-anchor for type II membrane protein span at residues 53 to 73 (WLLITTFVMAITIFTLLIVLF). Residues 74–786 (TDGGSSDATK…MNPTEKCEVW (713 aa)) lie on the Extracellular side of the membrane. Residues 102 to 786 (PCLNKHCIFA…MNPTEKCEVW (685 aa)) form the Peptidase M13 domain. Cystine bridges form between C103-C108, C126-C771, C134-C731, C190-C450, and C659-C783. Residues N216, N226, N256, N279, N305, N325, N356, N388, N496, and N569 are each glycosylated (N-linked (GlcNAc...) asparagine). Residue H622 participates in Zn(2+) binding. E623 is an active-site residue. Zn(2+) contacts are provided by H626 and E682. D686 (proton donor) is an active-site residue. N715 carries an N-linked (GlcNAc...) asparagine glycan.

The protein belongs to the peptidase M13 family. Zn(2+) serves as cofactor.

It localises to the cell membrane. The enzyme catalyses Preferential cleavage of polypeptides between hydrophobic residues, particularly with Phe or Tyr at P1'.. In terms of biological role, metalloendoprotease which is required in the dorsal paired medial neurons for the proper formation of long-term (LTM) and middle-term memories (MTM). Also required in the mushroom body neurons where it functions redundantly with neprilysins Nep2 and Nep4 in normal LTM formation. This Drosophila melanogaster (Fruit fly) protein is Neprilysin-3.